A 164-amino-acid polypeptide reads, in one-letter code: C-phycoerythrin alpha chain (164 aa).

(2R,3E)-phycoerythrobilin is bound by residues Cys82 and Cys139.

Belongs to the phycobiliprotein family. As to quaternary structure, heterodimer of an alpha and a beta chain. Post-translationally, contains two covalently linked bilin chromophores.

Its subcellular location is the cellular thylakoid membrane. Light-harvesting photosynthetic bile pigment-protein from the phycobiliprotein complex. The sequence is that of C-phycoerythrin alpha chain (cpeA) from Synechocystis sp. (strain PCC 6701).